The sequence spans 533 residues: D-3-phosphoglycerate dehydrogenase (533 aa).

The residue at position 2 (Ala2) is an N-acetylalanine. Ser14 is subject to Phosphoserine. Residue Lys21 is modified to N6-acetyllysine; alternate. Lys21 is covalently cross-linked (Glycyl lysine isopeptide (Lys-Gly) (interchain with G-Cter in SUMO1); alternate). A Glycyl lysine isopeptide (Lys-Gly) (interchain with G-Cter in SUMO2); alternate cross-link involves residue Lys21. Residue Lys58 is modified to N6-acetyllysine. NAD(+) is bound by residues Thr78, Arg155–Ile156, Asp175, Thr207, Cys234–Arg236, and Asp260. Thr78 is subject to Phosphothreonine. Residue Arg236 is part of the active site. The active site involves Glu265. His283 serves as the catalytic Proton donor. His283–Ala286 provides a ligand contact to NAD(+).

This sequence belongs to the D-isomer specific 2-hydroxyacid dehydrogenase family. Homotetramer. Liver, kidney, brain, testis.

The enzyme catalyses (2R)-3-phosphoglycerate + NAD(+) = 3-phosphooxypyruvate + NADH + H(+). It functions in the pathway amino-acid biosynthesis; L-serine biosynthesis; L-serine from 3-phospho-D-glycerate: step 1/3. Its function is as follows. Catalyzes the reversible oxidation of 3-phospho-D-glycerate to 3-phosphonooxypyruvate, the first step of the phosphorylated L-serine biosynthesis pathway. Does not catalyze the reversible oxidation of 2-hydroxyglutarate to 2-oxoglutarate and the reversible oxidation of (S)-malate to oxaloacetate. The polypeptide is D-3-phosphoglycerate dehydrogenase (Phgdh) (Rattus norvegicus (Rat)).